The primary structure comprises 152 residues: Protein-export protein SecB (152 aa).

This sequence belongs to the SecB family. Homotetramer, a dimer of dimers. One homotetramer interacts with 1 SecA dimer.

It localises to the cytoplasm. Functionally, one of the proteins required for the normal export of preproteins out of the cell cytoplasm. It is a molecular chaperone that binds to a subset of precursor proteins, maintaining them in a translocation-competent state. It also specifically binds to its receptor SecA. This chain is Protein-export protein SecB, found in Rickettsia akari (strain Hartford).